A 632-amino-acid polypeptide reads, in one-letter code: Probable potassium transport system protein Kup (632 aa).

Helical transmembrane passes span 17–37 (LFYL…TSPL), 60–80 (LISL…VLFL), 106–126 (TAIL…DAMI), 146–166 (LSEY…VVQS), 175–195 (FFGP…ISHI), 210–230 (AVSF…AVFL), 254–274 (WFLL…ALVL), 292–312 (ALLP…QAVI), 344–364 (IFVP…VLSF), 370–390 (LATA…IMAF), 401–421 (LPVA…FLGA), and 426–446 (IHDG…IMWT).

Belongs to the HAK/KUP transporter (TC 2.A.72) family.

The protein resides in the cell inner membrane. The catalysed reaction is K(+)(in) + H(+)(in) = K(+)(out) + H(+)(out). In terms of biological role, transport of potassium into the cell. Likely operates as a K(+):H(+) symporter. The protein is Probable potassium transport system protein Kup of Rhizobium rhizogenes (Agrobacterium rhizogenes).